A 103-amino-acid polypeptide reads, in one-letter code: MAIQGIEGVLQQMQATMQVARNNAVETPPSVSFAGELQAALGRISDTQNAARTQAEKFAIGTPGVALNDVMVDLQKSSISLQMGIQVRNKLVAAYQDIMNMQV.

The protein belongs to the FliE family.

It is found in the bacterial flagellum basal body. This is Flagellar hook-basal body complex protein FliE from Cronobacter sakazakii (strain ATCC BAA-894) (Enterobacter sakazakii).